The following is an 85-amino-acid chain: Alpha-defensin 11 (85 aa).

The N-terminal stretch at Ala1–Ala11 is a signal peptide. Residues Asp12–Ser50 constitute a propeptide that is removed on maturation. A disordered region spans residues Ile14–Leu46. 3 disulfide bridges follow: Cys56–Cys84, Cys58–Cys73, and Cys63–Cys83.

This sequence belongs to the alpha-defensin family. In terms of tissue distribution, paneth cells of the small bowel.

It localises to the secreted. Probably contributes to the antimicrobial barrier function of the small bowel mucosa. This is Alpha-defensin 11 (Defa11) from Mus musculus (Mouse).